Reading from the N-terminus, the 531-residue chain is MKLAYWMYAGPAHLGVLRVASSFKNVHAIMHAPLGDDYFNVMSSMLERDRDFTPVTASIVDRHVLATGSQRKVVATIHRKDQEDEPDLILVTPTCTSSILQEDLGNYVARAAPYTKSEVLLADVQHYRIHELQAQDRILEQVVRHIMDPERQKGTLDTTPTPTPSANLIGFFDLGFHHRDDSRELRRLLHGLGIEINSVLPKGGSIPDLHQLAKAWFNIIPYREAGLMTAKYLEESFHIPYIDRTPIGLIETRKFIGEIEAILQTRGVDRHEYYEKFIIHHETIVSQAAWFARSIDCQNLLGKRVIVFGDCTHAATITKLLVRELGIHVVCAGTYCKYDEAWFREQVNGYVDEILITEDHTQVADTISRLEPAAIFGTQMERHVGKRLDIPCGVISAPAHIQNFPLSFRPFLGYEGTNVVADLIYNTFRLGMEDHLLELFGGHDTKQIGESQMAESISNSKGCQWTPEAEKELAHIPRFVRSKVKRATERFAQEHGYPVINLECIYLAKQSTSVDIETIQHLLFNDETEVQ.

Position 36 (D36) interacts with [4Fe-4S] cluster. D296 (proton donor) is an active-site residue. Residue 431–432 (GM) participates in substrate binding.

Belongs to the ChlB/BchB/BchZ family. As to quaternary structure, protochlorophyllide reductase is composed of three subunits; ChlL, ChlN and ChlB. Forms a heterotetramer of two ChlB and two ChlN subunits. [4Fe-4S] cluster serves as cofactor.

It is found in the plastid. The protein localises to the chloroplast. It catalyses the reaction chlorophyllide a + oxidized 2[4Fe-4S]-[ferredoxin] + 2 ADP + 2 phosphate = protochlorophyllide a + reduced 2[4Fe-4S]-[ferredoxin] + 2 ATP + 2 H2O. It functions in the pathway porphyrin-containing compound metabolism; chlorophyll biosynthesis (light-independent). Component of the dark-operative protochlorophyllide reductase (DPOR) that uses Mg-ATP and reduced ferredoxin to reduce ring D of protochlorophyllide (Pchlide) to form chlorophyllide a (Chlide). This reaction is light-independent. The NB-protein (ChlN-ChlB) is the catalytic component of the complex. In Nephroselmis olivacea (Green alga), this protein is Light-independent protochlorophyllide reductase subunit B.